The following is a 268-amino-acid chain: Testis-specific serine/threonine-protein kinase 3 (268 aa).

One can recognise a Protein kinase domain in the interval 10–265; that stretch reads YQLGKTIGEG…IEEVSWHPWL (256 aa). Residues 16–24 and lysine 39 each bind ATP; that span reads IGEGTYSKV. Aspartate 134 acts as the Proton acceptor in catalysis. Serine 166 carries the phosphoserine modification. Threonine 168 bears the Phosphothreonine mark.

It belongs to the protein kinase superfamily. CAMK Ser/Thr protein kinase family. The cofactor is Mg(2+). Mn(2+) is required as a cofactor. Post-translationally, autophosphorylated at Ser-166. Phosphorylation at Thr-168 by PDPK1 activates the serine/threonine protein kinase activity.

The protein resides in the cell projection. It localises to the cilium. It is found in the flagellum. The enzyme catalyses L-seryl-[protein] + ATP = O-phospho-L-seryl-[protein] + ADP + H(+). It catalyses the reaction L-threonyl-[protein] + ATP = O-phospho-L-threonyl-[protein] + ADP + H(+). Its activity is regulated as follows. Activated by phosphorylation on Thr-168 by PDPK1. In terms of biological role, serine/threonine protein kinase required for spermatid development and male fertility. The chain is Testis-specific serine/threonine-protein kinase 3 from Homo sapiens (Human).